The primary structure comprises 256 residues: Rano class II histocompatibility antigen, B alpha chain (256 aa).

The first 23 residues, 1 to 23 (MPLSRALILGVLALTTMLSPCGG), serve as a signal peptide directing secretion. The alpha-1 stretch occupies residues 24-111 (QDDIEADHVG…KRSNSTPAVN (88 aa)). The Extracellular portion of the chain corresponds to 24 to 218 (QDDIEADHVG…IPAPMSELTE (195 aa)). Residues 108–206 (PAVNEVPEAT…LDEPVLRHWE (99 aa)) form the Ig-like C1-type domain. The interval 112–205 (EVPEATVFSK…SLDEPVLRHW (94 aa)) is alpha-2. The cysteines at positions 134 and 190 are disulfide-linked. Asparagine 145 carries an N-linked (GlcNAc...) asparagine glycan. The interval 206-218 (EPEIPAPMSELTE) is connecting peptide. A helical transmembrane segment spans residues 219 to 244 (TVVCALGLSVGLVGIVVGTIFIIQGL). Residues 245–256 (RSVAPSRHPGPL) are Cytoplasmic-facing.

It belongs to the MHC class II family.

Its subcellular location is the membrane. This Rattus norvegicus (Rat) protein is Rano class II histocompatibility antigen, B alpha chain (RT1-Ba).